Here is a 300-residue protein sequence, read N- to C-terminus: Phosphatidylglycerol--prolipoprotein diacylglyceryl transferase (300 aa).

Helical transmembrane passes span 17–37, 59–79, 94–114, 129–149, 204–224, 230–250, and 265–285; these read LAIRWYGLMYLAAFIMFLWFG, MLFYGVLGVILGGRLGYVLFY, VWEGGMAFHGGFLGVVVAMML, FIAPMVPCGLAAGRLGNFING, SQIYQFLGEGVLFFILLWLYA, MGAVSGAFLLGYGVFRFAAEF, and LSMGQWLSLPMILIGIAMLVW. Position 142 (Arg-142) interacts with a 1,2-diacyl-sn-glycero-3-phospho-(1'-sn-glycerol).

This sequence belongs to the Lgt family.

The protein localises to the cell inner membrane. It carries out the reaction L-cysteinyl-[prolipoprotein] + a 1,2-diacyl-sn-glycero-3-phospho-(1'-sn-glycerol) = an S-1,2-diacyl-sn-glyceryl-L-cysteinyl-[prolipoprotein] + sn-glycerol 1-phosphate + H(+). The protein operates within protein modification; lipoprotein biosynthesis (diacylglyceryl transfer). Its function is as follows. Catalyzes the transfer of the diacylglyceryl group from phosphatidylglycerol to the sulfhydryl group of the N-terminal cysteine of a prolipoprotein, the first step in the formation of mature lipoproteins. The polypeptide is Phosphatidylglycerol--prolipoprotein diacylglyceryl transferase (Ralstonia pickettii (strain 12J)).